Here is a 333-residue protein sequence, read N- to C-terminus: B3 domain-containing protein At1g32030 (333 aa).

2 stretches are compositionally biased toward polar residues: residues 76 to 99 (VTVR…SLLD) and 134 to 143 (PQNASSSSTL). Positions 76-179 (VTVRNPEQNQ…SEPKKAKTPY (104 aa)) are disordered. The segment at residues 220–328 (QSRLLMPFNT…ILSFALVLPP (109 aa)) is a DNA-binding region (TF-B3).

Its subcellular location is the nucleus. The protein is B3 domain-containing protein At1g32030 of Arabidopsis thaliana (Mouse-ear cress).